A 952-amino-acid polypeptide reads, in one-letter code: Inner tegument protein (952 aa).

Residues 490–952 form an interaction with large tegument protein region; it reads WQLKPHTILQ…PPPTDPALTN (463 aa).

This sequence belongs to the herpesviridae inner tegument protein family. As to quaternary structure, interacts (via C-terminus) with the large tegument protein/LTP (via N-terminus).

It localises to the virion tegument. The protein localises to the host cytoplasm. The protein resides in the host nucleus. It is found in the host Golgi apparatus. Its subcellular location is the host trans-Golgi network. Plays an essential role in cytoplasmic secondary envelopment during viral egress. Interacts with the capsid via the large tegument protein/LTP and participates in its transport to the host trans-Golgi network (TGN) where secondary envelopment occurs. Modulates tegumentation and capsid accumulation at the viral assembly complex. The protein is Inner tegument protein (63) of Connochaetes taurinus (Blue wildebeest).